A 228-amino-acid chain; its full sequence is Cytochrome c oxidase subunit 2 (228 aa).

Over 1–14 the chain is Mitochondrial intermembrane; it reads MANHSQLGFQDASS. The chain crosses the membrane as a helical span at residues 15–45; the sequence is PIMEELVEFHDHALIVALAICSLVLYLLAHM. At 46–58 the chain is on the mitochondrial matrix side; it reads LMEKLSSNAVDAQ. A helical transmembrane segment spans residues 59–86; the sequence is EVELIWTILPAIVLVLLALPSLQILYMM. The Mitochondrial intermembrane portion of the chain corresponds to 87–228; sequence DEIDEPDLTL…ETWSSLLSAS (142 aa). 6 residues coordinate Cu cation: H160, C195, E197, C199, H203, and M206. E197 is a Mg(2+) binding site.

This sequence belongs to the cytochrome c oxidase subunit 2 family. As to quaternary structure, component of the cytochrome c oxidase (complex IV, CIV), a multisubunit enzyme composed of 14 subunits. The complex is composed of a catalytic core of 3 subunits MT-CO1, MT-CO2 and MT-CO3, encoded in the mitochondrial DNA, and 11 supernumerary subunits COX4I, COX5A, COX5B, COX6A, COX6B, COX6C, COX7A, COX7B, COX7C, COX8 and NDUFA4, which are encoded in the nuclear genome. The complex exists as a monomer or a dimer and forms supercomplexes (SCs) in the inner mitochondrial membrane with NADH-ubiquinone oxidoreductase (complex I, CI) and ubiquinol-cytochrome c oxidoreductase (cytochrome b-c1 complex, complex III, CIII), resulting in different assemblies (supercomplex SCI(1)III(2)IV(1) and megacomplex MCI(2)III(2)IV(2)). Found in a complex with TMEM177, COA6, COX18, COX20, SCO1 and SCO2. Interacts with TMEM177 in a COX20-dependent manner. Interacts with COX20. Interacts with COX16. Requires Cu cation as cofactor.

It is found in the mitochondrion inner membrane. It carries out the reaction 4 Fe(II)-[cytochrome c] + O2 + 8 H(+)(in) = 4 Fe(III)-[cytochrome c] + 2 H2O + 4 H(+)(out). Functionally, component of the cytochrome c oxidase, the last enzyme in the mitochondrial electron transport chain which drives oxidative phosphorylation. The respiratory chain contains 3 multisubunit complexes succinate dehydrogenase (complex II, CII), ubiquinol-cytochrome c oxidoreductase (cytochrome b-c1 complex, complex III, CIII) and cytochrome c oxidase (complex IV, CIV), that cooperate to transfer electrons derived from NADH and succinate to molecular oxygen, creating an electrochemical gradient over the inner membrane that drives transmembrane transport and the ATP synthase. Cytochrome c oxidase is the component of the respiratory chain that catalyzes the reduction of oxygen to water. Electrons originating from reduced cytochrome c in the intermembrane space (IMS) are transferred via the dinuclear copper A center (CU(A)) of subunit 2 and heme A of subunit 1 to the active site in subunit 1, a binuclear center (BNC) formed by heme A3 and copper B (CU(B)). The BNC reduces molecular oxygen to 2 water molecules using 4 electrons from cytochrome c in the IMS and 4 protons from the mitochondrial matrix. This is Cytochrome c oxidase subunit 2 (MT-CO2) from Cairina moschata (Muscovy duck).